Reading from the N-terminus, the 436-residue chain is Adenosylmethionine-8-amino-7-oxononanoate aminotransferase (436 aa).

A substrate-binding site is contributed by Trp66. 126–127 contacts pyridoxal 5'-phosphate; sequence GS. A substrate-binding site is contributed by Tyr159. Position 256 (Asp256) interacts with pyridoxal 5'-phosphate. Residues Lys285 and Gly318 each contribute to the substrate site. An N6-(pyridoxal phosphate)lysine modification is found at Lys285. Residue 319–320 participates in pyridoxal 5'-phosphate binding; the sequence is PT. Arg402 is a substrate binding site.

The protein belongs to the class-III pyridoxal-phosphate-dependent aminotransferase family. BioA subfamily. Homodimer. Pyridoxal 5'-phosphate serves as cofactor.

Its subcellular location is the cytoplasm. The catalysed reaction is (8S)-8-amino-7-oxononanoate + S-adenosyl-L-methionine = S-adenosyl-4-methylsulfanyl-2-oxobutanoate + (7R,8S)-7,8-diammoniononanoate. It participates in cofactor biosynthesis; biotin biosynthesis; 7,8-diaminononanoate from 8-amino-7-oxononanoate (SAM route): step 1/1. Catalyzes the transfer of the alpha-amino group from S-adenosyl-L-methionine (SAM) to 7-keto-8-aminopelargonic acid (KAPA) to form 7,8-diaminopelargonic acid (DAPA). It is the only aminotransferase known to utilize SAM as an amino donor. The chain is Adenosylmethionine-8-amino-7-oxononanoate aminotransferase from Mycobacterium leprae (strain TN).